We begin with the raw amino-acid sequence, 479 residues long: Neuronal acetylcholine receptor subunit alpha-9 (479 aa).

Residues 1-22 (MNWSHSCISFCWIYFAASRLRA) form the signal peptide. Residues 23–238 (AETADGKYAQ…FTLLLKRRSS (216 aa)) lie on the Extracellular side of the membrane. Residue Asn-57 is glycosylated (N-linked (GlcNAc...) asparagine). Cys-155 and Cys-169 form a disulfide bridge. N-linked (GlcNAc...) asparagine glycosylation is present at Asn-170. Na(+) is bound by residues Ser-191 and Asp-193. The cysteines at positions 219 and 220 are disulfide-linked. A run of 3 helical transmembrane segments spans residues 239 to 259 (FYIV…PLSF), 269 to 289 (VSLG…VAEI), and 303 to 323 (YIAT…VMNI). At 324–457 (HFCGAEARPV…WKKVAKVIDR (134 aa)) the chain is on the cytoplasmic side. Residues 458–478 (FFMWIFFIMVFVMTILIIARA) form a helical membrane-spanning segment.

The protein belongs to the ligand-gated ion channel (TC 1.A.9) family. Acetylcholine receptor (TC 1.A.9.1) subfamily. Alpha-9/CHRNA9 sub-subfamily. As to quaternary structure, forms homo- or heteropentameric channels in conjunction with CHRNA10. The native outer hair cell receptor is composed of CHRNA9:CHRNA10 heterooligomers. Found in the stoichiometric form (CHRNA9)2:(CHRNA10)3. N-glycosylated. Expressed in cochlea, keratinocytes, pituitary gland, B-cells and T-cells.

Its subcellular location is the synaptic cell membrane. It localises to the cell membrane. It catalyses the reaction Ca(2+)(in) = Ca(2+)(out). It carries out the reaction K(+)(in) = K(+)(out). The catalysed reaction is Na(+)(in) = Na(+)(out). The enzyme catalyses Mg(2+)(in) = Mg(2+)(out). Activated by a myriad of ligands such as acetylcholine. AChR activity is inhibited by the antagonist alpha-conotoxins RgIA and GeXXA, small disulfide-constrained peptides from cone snails. Functionally, component of neuronal acetylcholine receptors (nAChRs) that function as pentameric, ligand-gated cation channels with high calcium permeability among other activities. nAChRs are excitatory neurotrasnmitter receptors formed by a collection of nAChR subunits known to mediate synaptic transmission in the nervous system and the neuromuscular junction. Each nAchR subunit confers differential attributes to channel properties, including activation, deactivation and desensitization kinetics, pH sensitivity, cation permeability, and binding to allosteric modulators. Forms either homopentamers or heteropentamers with CHRNA10. Expressed in the inner ear, in sympathetic neurons and in other non-neuronal cells, such as skin keratinocytes and lymphocytes. nAChR formed by CHRNA9:CHRNA10 mediate central nervous system control of auditory and vestibular sensory processing. The channel is permeable to a range of divalent cations including calcium, the influx of which may activate a potassium current which hyperpolarizes the cell membrane. In the ear, mediates synaptic transmission between efferent olivocochlear fibers and hair cells of the cochlea, this may lead to a reduction in basilar membrane motion, altering the activity of auditory nerve fibers and reducing the range of dynamic hearing. This may protect against acoustic trauma. May also regulate keratinocyte adhesion. The polypeptide is Neuronal acetylcholine receptor subunit alpha-9 (Homo sapiens (Human)).